Reading from the N-terminus, the 689-residue chain is Glycine--tRNA ligase beta subunit (689 aa).

This sequence belongs to the class-II aminoacyl-tRNA synthetase family. Tetramer of two alpha and two beta subunits.

Its subcellular location is the cytoplasm. The catalysed reaction is tRNA(Gly) + glycine + ATP = glycyl-tRNA(Gly) + AMP + diphosphate. This is Glycine--tRNA ligase beta subunit from Salmonella paratyphi C (strain RKS4594).